Consider the following 288-residue polypeptide: Probable chromosome 1-partitioning protein ParB (288 aa).

Belongs to the ParB family.

Its function is as follows. Involved in chromosome partition. Localize to both poles of the predivisional cell following completion of DNA replication. Binds to the DNA origin of replication. The protein is Probable chromosome 1-partitioning protein ParB (parB1) of Deinococcus radiodurans (strain ATCC 13939 / DSM 20539 / JCM 16871 / CCUG 27074 / LMG 4051 / NBRC 15346 / NCIMB 9279 / VKM B-1422 / R1).